A 344-amino-acid polypeptide reads, in one-letter code: Protease HtpX homolog (344 aa).

Transmembrane regions (helical) follow at residues 8 to 28, 46 to 66, and 74 to 94; these read VALGLYMLGYLFMFVIAATVA, ALTGVMIVLTTAFVIYLFVLV, and VSFLVGLIAFVVLMNLLTYVA. Position 172 (H172) interacts with Zn(2+). The active site involves E173. H176 is a Zn(2+) binding site. 2 helical membrane passes run 183–203 and 220–240; these read AIMLLFGVLPSVVYYLGVTAV and LAVGVVAVLASFLIQLLVLAF. Residue E245 coordinates Zn(2+).

It belongs to the peptidase M48B family. Zn(2+) is required as a cofactor.

It is found in the cell membrane. The chain is Protease HtpX homolog from Pyrobaculum calidifontis (strain DSM 21063 / JCM 11548 / VA1).